We begin with the raw amino-acid sequence, 207 residues long: Serotonin N-acetyltransferase (207 aa).

Position 31 is a phosphothreonine; by PKA (Thr31). The region spanning 35–194 (SEFRCLTPQD…SLTFMELQCS (160 aa)) is the N-acetyltransferase domain. Leu124 is a substrate binding site. Acetyl-CoA-binding positions include 124–126 (LAV) and 132–137 (QQGKGS). Met159 serves as a coordination point for substrate. 168–170 (YEK) contributes to the acetyl-CoA binding site. At Ser205 the chain carries Phosphoserine.

The protein belongs to the acetyltransferase family. AANAT subfamily. Monomer. Interacts with several 14-3-3 proteins, including YWHAB, YWHAE, YWHAG and YWHAZ, preferentially when phosphorylated at Thr-31. Phosphorylation on Ser-205 also allows binding to YWHAZ, but with lower affinity. The interaction with YWHAZ considerably increases affinity for arylalkylamines and acetyl-CoA and protects the enzyme from dephosphorylation and proteasomal degradation. It may also prevent thiol-dependent inactivation. Post-translationally, cAMP-dependent phosphorylation on both N-terminal Thr-31 and C-terminal Ser-205 regulates AANAT activity by promoting interaction with 14-3-3 proteins. As to expression, highly expressed in pineal gland and retina. Also detected in heart and intestine.

It is found in the cytoplasm. The catalysed reaction is a 2-arylethylamine + acetyl-CoA = an N-acetyl-2-arylethylamine + CoA + H(+). It participates in aromatic compound metabolism; melatonin biosynthesis; melatonin from serotonin: step 1/2. Its function is as follows. Controls the night/day rhythm of melatonin production in the pineal gland. Catalyzes the N-acetylation of serotonin into N-acetylserotonin, the penultimate step in the synthesis of melatonin. The protein is Serotonin N-acetyltransferase (AANAT) of Mesocricetus auratus (Golden hamster).